Here is a 128-residue protein sequence, read N- to C-terminus: Light-regulated protein, chloroplastic (128 aa).

2 tandem repeats follow at residues 58-72 and 111-125. The segment at 58-125 is 2 X 15 AA approximate repeats; sequence VFPMEACDLI…ACDDLGGEFC (68 aa).

As to quaternary structure, component of high molecular weight thylakoid LFNRs-containing protein complexes containing LIR1, LFNR1, LFNR2, TIC62 and TROL proteins. Interacts directly with LFNR1 and LFNR2; LIR1 increases the affinity of LFNR1 and LFNR2 for TIC62 and subsequent thylakoid relocalization. Post-translationally, may form interchain disulfide bonds with LFNR1 and LFNR2.

Its subcellular location is the plastid. It localises to the chloroplast thylakoid membrane. The protein localises to the chloroplast envelope. It is found in the chloroplast stroma. Thylakoid-determinant subunit of high molecular weight LFNRs-containing protein complexes. The sequence is that of Light-regulated protein, chloroplastic (LIR1) from Oryza sativa subsp. japonica (Rice).